Here is a 37-residue protein sequence, read N- to C-terminus: Cytochrome b6-f complex subunit 5 (37 aa).

Residues 5 to 25 form a helical membrane-spanning segment; it reads LLSGIVLGLVPVTIAGLFVTA.

Belongs to the PetG family. In terms of assembly, the 4 large subunits of the cytochrome b6-f complex are cytochrome b6, subunit IV (17 kDa polypeptide, PetD), cytochrome f and the Rieske protein, while the 4 small subunits are PetG, PetL, PetM and PetN. The complex functions as a dimer.

The protein resides in the plastid. The protein localises to the chloroplast thylakoid membrane. Component of the cytochrome b6-f complex, which mediates electron transfer between photosystem II (PSII) and photosystem I (PSI), cyclic electron flow around PSI, and state transitions. PetG is required for either the stability or assembly of the cytochrome b6-f complex. The chain is Cytochrome b6-f complex subunit 5 from Chlamydomonas moewusii (Chlamydomonas eugametos).